The primary structure comprises 81 residues: Photosystem I iron-sulfur center (81 aa).

2 4Fe-4S ferredoxin-type domains span residues 2–31 (SHSV…MIPW) and 39–68 (IASA…VRVY). Residues C11, C14, C17, C21, C48, C51, C54, and C58 each contribute to the [4Fe-4S] cluster site.

In terms of assembly, the eukaryotic PSI reaction center is composed of at least 11 subunits. The cofactor is [4Fe-4S] cluster.

Its subcellular location is the plastid. It localises to the chloroplast thylakoid membrane. The enzyme catalyses reduced [plastocyanin] + hnu + oxidized [2Fe-2S]-[ferredoxin] = oxidized [plastocyanin] + reduced [2Fe-2S]-[ferredoxin]. Its function is as follows. Apoprotein for the two 4Fe-4S centers FA and FB of photosystem I (PSI); essential for photochemical activity. FB is the terminal electron acceptor of PSI, donating electrons to ferredoxin. The C-terminus interacts with PsaA/B/D and helps assemble the protein into the PSI complex. Required for binding of PsaD and PsaE to PSI. PSI is a plastocyanin-ferredoxin oxidoreductase, converting photonic excitation into a charge separation, which transfers an electron from the donor P700 chlorophyll pair to the spectroscopically characterized acceptors A0, A1, FX, FA and FB in turn. The protein is Photosystem I iron-sulfur center of Phalaenopsis aphrodite subsp. formosana (Moth orchid).